We begin with the raw amino-acid sequence, 478 residues long: Protein FAM83E (478 aa).

Positions 1-293 (MAASQLAALE…LYAASCPLPP (293 aa)) are DUF1669. 3 disordered regions span residues 292–334 (PPAP…PLAH), 359–436 (RART…LPPA), and 452–478 (DATF…GGQP). The segment covering 309 to 319 (RSPHRVSRRRS) has biased composition (basic residues). The span at 379–388 (RLSQLSGSSD) shows a compositional bias: polar residues.

It belongs to the FAM83 family. As to quaternary structure, directly interacts (via DUF1669) with CSNK1A1, CSNK1A1L, CSNK1D and CSNK1E. May interact with RAF1.

The protein resides in the cytoplasm. Its subcellular location is the perinuclear region. May play a role in MAPK signaling. The chain is Protein FAM83E from Homo sapiens (Human).